A 334-amino-acid polypeptide reads, in one-letter code: Holliday junction branch migration complex subunit RuvB (334 aa).

The interval 4 to 184 is large ATPase domain (RuvB-L); that stretch reads ADRLISAEPI…FGIVQRLEFY (181 aa). Residues Ile-23, Arg-24, Gly-65, Lys-68, Thr-69, Thr-70, 131-133, Arg-174, Tyr-184, and Arg-221 contribute to the ATP site; that span reads EDY. A Mg(2+)-binding site is contributed by Thr-69. Residues 185-255 are small ATPAse domain (RuvB-S); sequence QVADLQHIVS…VAMQALDMLN (71 aa). The interval 258–334 is head domain (RuvB-H); sequence AEGFDYMDRK…YKHFGMVREE (77 aa). Positions 294, 313, and 318 each coordinate DNA.

It belongs to the RuvB family. In terms of assembly, homohexamer. Forms an RuvA(8)-RuvB(12)-Holliday junction (HJ) complex. HJ DNA is sandwiched between 2 RuvA tetramers; dsDNA enters through RuvA and exits via RuvB. An RuvB hexamer assembles on each DNA strand where it exits the tetramer. Each RuvB hexamer is contacted by two RuvA subunits (via domain III) on 2 adjacent RuvB subunits; this complex drives branch migration. In the full resolvosome a probable DNA-RuvA(4)-RuvB(12)-RuvC(2) complex forms which resolves the HJ.

It is found in the cytoplasm. The enzyme catalyses ATP + H2O = ADP + phosphate + H(+). Functionally, the RuvA-RuvB-RuvC complex processes Holliday junction (HJ) DNA during genetic recombination and DNA repair, while the RuvA-RuvB complex plays an important role in the rescue of blocked DNA replication forks via replication fork reversal (RFR). RuvA specifically binds to HJ cruciform DNA, conferring on it an open structure. The RuvB hexamer acts as an ATP-dependent pump, pulling dsDNA into and through the RuvAB complex. RuvB forms 2 homohexamers on either side of HJ DNA bound by 1 or 2 RuvA tetramers; 4 subunits per hexamer contact DNA at a time. Coordinated motions by a converter formed by DNA-disengaged RuvB subunits stimulates ATP hydrolysis and nucleotide exchange. Immobilization of the converter enables RuvB to convert the ATP-contained energy into a lever motion, pulling 2 nucleotides of DNA out of the RuvA tetramer per ATP hydrolyzed, thus driving DNA branch migration. The RuvB motors rotate together with the DNA substrate, which together with the progressing nucleotide cycle form the mechanistic basis for DNA recombination by continuous HJ branch migration. Branch migration allows RuvC to scan DNA until it finds its consensus sequence, where it cleaves and resolves cruciform DNA. In Serratia proteamaculans (strain 568), this protein is Holliday junction branch migration complex subunit RuvB.